The primary structure comprises 121 residues: Estrogen receptor (121 aa).

The region spanning 1–121 is the NR LBD domain; it reads LFAPNLLLDR…IRHMSNKGME (121 aa). C45 carries the S-palmitoyl cysteine lipid modification.

This sequence belongs to the nuclear hormone receptor family. NR3 subfamily. In terms of assembly, binds DNA as a homodimer. Can form a heterodimer with ESR2. Interacts with coactivator NCOA5. Interacts with NCOA7; the interaction is ligand-inducible. Interacts with AKAP13, CUEDC2, HEXIM1, KDM5A, MAP1S, PELP1, SMARD1, and UBE1C. Interacts with MUC1; the interaction is stimulated by 7 beta-estradiol (E2) and enhances ERS1-mediated transcription. Interacts with DNTTIP2, and UIMC1. Interacts with KMT2D/MLL2. Interacts with ATAD2; the interaction is enhanced by estradiol. Interacts with KIF18A and LDB1. Interacts with RLIM (via its C-terminus). Interacts with MACROD1. Interacts with SH2D4A and PLCG. Interacts with SH2D4A; the interaction blocks binding to PLCG and inhibits estrogen-induced cell proliferation. Interacts with DYNLL1. Interacts with CCDC62; the interaction requires estradiol and appears to enhance the transcription of target genes. Interacts with NR2C1; the interaction prevents homodimerization of ESR1 and suppresses its transcriptional activity and cell growth. Interacts with DNAAF4. Interacts with PRMT2. Interacts with PI3KR1 or PIK3R2, SRC and PTK2/FAK1. Interacts with RBFOX2. Interacts with EP300; the interaction is estrogen-dependent and enhanced by CITED1. Interacts with CITED1; the interaction is estrogen-dependent. Interacts with FAM120B, FOXL2, PHB2 and SLC30A9. Interacts with coactivators NCOA3 and NCOA6. Interacts with STK3/MST2 only in the presence of SAV1 and vice-versa. Binds to CSNK1D. Interacts with NCOA2; NCOA2 can interact with ESR1 AF-1 and AF-2 domains simultaneously and mediate their transcriptional synergy. Interacts with DDX5. Interacts with NCOA1; the interaction seems to require a self-association of N-terminal and C-terminal regions. Interacts with ZNF366, DDX17, NFKB1, RELA, SP1 and SP3. Interacts with NRIP1. Interacts with GPER1; the interaction occurs in an estrogen-dependent manner. Interacts with CLOCK and the interaction is stimulated by estrogen. Interacts with TRIP4 (ufmylated); estrogen dependent. Interacts with LMTK3; the interaction phosphorylates ESR1 (in vitro) and protects it against proteasomal degradation. Interacts with CCAR2 (via N-terminus) in a ligand-independent manner. Interacts with ZFHX3. Interacts with SFR1 in a ligand-dependent and -independent manner. Interacts with DCAF13, LATS1 and DCAF1; regulates ESR1 ubiquitination and ubiquitin-mediated proteasomal degradation. Interacts (via DNA-binding domain) with POU4F2 (C-terminus); this interaction increases the estrogen receptor ESR1 transcriptional activity in a DNA- and ligand 17-beta-estradiol-independent manner. Interacts with ESRRB isoform 1. Interacts with UBE3A and WBP2. Interacts with GTF2B. Interacts with RBM39. In the absence of hormonal ligand, interacts with TACC1. Interacts with BAG1; the interaction is promoted in the absence of estradiol (17-beta-estradiol/E2). Interacts with and ubiquitinated by STUB1; the interaction is promoted in the absence of estradiol (17-beta-estradiol/E2). Interacts with NEDD8. Ubiquitinated; regulated by LATS1 via DCAF1 it leads to ESR1 proteasomal degradation. Deubiquitinated by OTUB1. Ubiquitinated by STUB1/CHIP; in the CA1 hippocampal region following loss of endogenous circulating estradiol (17-beta-estradiol/E2). Ubiquitinated by UBR5, leading to its degradation: UBR5 specifically recognizes and binds ligand-bound ESR1 when it is not associated with coactivators (NCOAs). In presence of NCOAs, the UBR5-degron is not accessible, preventing its ubiquitination and degradation. In terms of processing, palmitoylated at Cys-45 by ZDHHC7 and ZDHHC21. Palmitoylation is required for plasma membrane targeting and for rapid intracellular signaling via ERK and AKT kinases and cAMP generation, but not for signaling mediated by the nuclear hormone receptor. Post-translationally, phosphorylated by cyclin A/CDK2 and CK1. Phosphorylation probably enhances transcriptional activity. Dephosphorylation by PPP5C inhibits its transactivation activity. Phosphorylated by LMTK3 (in vitro). Dimethylated by PRMT1. Demethylated by JMJD6.

The protein localises to the nucleus. The protein resides in the cytoplasm. It is found in the golgi apparatus. Its subcellular location is the cell membrane. Nuclear hormone receptor. The steroid hormones and their receptors are involved in the regulation of eukaryotic gene expression and affect cellular proliferation and differentiation in target tissues. Ligand-dependent nuclear transactivation involves either direct homodimer binding to a palindromic estrogen response element (ERE) sequence or association with other DNA-binding transcription factors, such as AP-1/c-Jun, c-Fos, ATF-2, Sp1 and Sp3, to mediate ERE-independent signaling. Ligand binding induces a conformational change allowing subsequent or combinatorial association with multiprotein coactivator complexes through LXXLL motifs of their respective components. Mutual transrepression occurs between the estrogen receptor (ER) and NF-kappa-B in a cell-type specific manner. Decreases NF-kappa-B DNA-binding activity and inhibits NF-kappa-B-mediated transcription from the IL6 promoter and displace RELA/p65 and associated coregulators from the promoter. Recruited to the NF-kappa-B response element of the CCL2 and IL8 promoters and can displace CREBBP. Present with NF-kappa-B components RELA/p65 and NFKB1/p50 on ERE sequences. Can also act synergistically with NF-kappa-B to activate transcription involving respective recruitment adjacent response elements; the function involves CREBBP. Can activate the transcriptional activity of TFF1. Also mediates membrane-initiated estrogen signaling involving various kinase cascades. Essential for MTA1-mediated transcriptional regulation of BRCA1 and BCAS3. Maintains neuronal survival in response to ischemic reperfusion injury when in the presence of circulating estradiol (17-beta-estradiol/E2). The polypeptide is Estrogen receptor (ESR1) (Macaca mulatta (Rhesus macaque)).